A 152-amino-acid polypeptide reads, in one-letter code: Transcriptional regulator MraZ (152 aa).

2 SpoVT-AbrB domains span residues 5–51 (VNSI…PLPE) and 80–123 (AAEC…DEVL).

The protein belongs to the MraZ family. In terms of assembly, forms oligomers.

The protein localises to the cytoplasm. It is found in the nucleoid. The sequence is that of Transcriptional regulator MraZ from Methylococcus capsulatus (strain ATCC 33009 / NCIMB 11132 / Bath).